A 328-amino-acid polypeptide reads, in one-letter code: MGAAARLSAPRALVLWAALGAAAHIGPAPDPEDWWSYKDNLQGNFVPGPPFWGLVNAAWSLCAVGKRQSPVDVELKRVLYDPFLPPLRLSTGGEKLRGTLYNTGRHVSFLPAPRPVVNVSGGPLLYSHRLSELRLLFGARDGAGSEHQINHQGFSAEVQLIHFNQELYGNFSAASRGPNGLAILSLFVNVASTSNPFLSRLLNRDTITRISYKNDAYFLQDLSLELLFPESFGFITYQGSLSTPPCSETVTWILIDRALNITSLQMHSLRLLSQNPPSQIFRSLSGNSRPLQPLAHRALRGNRDPRHPERRCRGPNYRLHVDGAPHGR.

A signal peptide spans 1-23; the sequence is MGAAARLSAPRALVLWAALGAAA. The region spanning 33 to 303 is the Alpha-carbonic anhydrase domain; that stretch reads DWWSYKDNLQ…LAHRALRGNR (271 aa). N-linked (GlcNAc...) asparagine glycosylation is found at N118, N170, and N260. The interval 299–328 is disordered; sequence LRGNRDPRHPERRCRGPNYRLHVDGAPHGR. Residues 319–328 are compositionally biased toward basic and acidic residues; the sequence is LHVDGAPHGR.

The protein belongs to the alpha-carbonic anhydrase family.

The protein resides in the secreted. Does not have a catalytic activity. This is Carbonic anhydrase-related protein 11 (CA11) from Pongo abelii (Sumatran orangutan).